The chain runs to 462 residues: Argininosuccinate lyase (462 aa).

Belongs to the lyase 1 family. Argininosuccinate lyase subfamily.

It localises to the cytoplasm. It catalyses the reaction 2-(N(omega)-L-arginino)succinate = fumarate + L-arginine. The protein operates within amino-acid biosynthesis; L-arginine biosynthesis; L-arginine from L-ornithine and carbamoyl phosphate: step 3/3. This is Argininosuccinate lyase from Bacillus cereus (strain ATCC 14579 / DSM 31 / CCUG 7414 / JCM 2152 / NBRC 15305 / NCIMB 9373 / NCTC 2599 / NRRL B-3711).